The chain runs to 545 residues: Chaperonin GroEL (545 aa).

ATP is bound by residues 30-33, Lys51, 87-91, Gly415, 479-481, and Asp495; these read TLGP, DGTTT, and NAA.

Belongs to the chaperonin (HSP60) family. Forms a cylinder of 14 subunits composed of two heptameric rings stacked back-to-back. Interacts with the co-chaperonin GroES.

The protein localises to the cytoplasm. The catalysed reaction is ATP + H2O + a folded polypeptide = ADP + phosphate + an unfolded polypeptide.. In terms of biological role, together with its co-chaperonin GroES, plays an essential role in assisting protein folding. The GroEL-GroES system forms a nano-cage that allows encapsulation of the non-native substrate proteins and provides a physical environment optimized to promote and accelerate protein folding. This Cellvibrio japonicus (strain Ueda107) (Pseudomonas fluorescens subsp. cellulosa) protein is Chaperonin GroEL.